The primary structure comprises 2280 residues: Protein Ycf2 (2280 aa).

1634–1641 (GSIGTGRS) is an ATP binding site.

Belongs to the Ycf2 family.

It localises to the plastid. The protein resides in the chloroplast stroma. Functionally, probable ATPase of unknown function. Its presence in a non-photosynthetic plant (Epifagus virginiana) and experiments in tobacco indicate that it has an essential function which is probably not related to photosynthesis. This Eucalyptus globulus subsp. globulus (Tasmanian blue gum) protein is Protein Ycf2.